The sequence spans 93 residues: Protein LSO1 (93 aa).

The tract at residues 1–73 (MHNTGKRYSE…TEKLRAKKER (73 aa)) is disordered. Residues 20-83 (ARKRRQAYEK…DQLLAAEEEA (64 aa)) adopt a coiled-coil conformation. Composition is skewed to basic and acidic residues over residues 25-49 (QAYEKDQLEKQQLEAQEAQRWEEGA) and 57-73 (LIMEQKKTEKLRAKKER).

It localises to the nucleus. The protein resides in the cytoplasm. Likely to play a role in iron homeostasis. This is Protein LSO1 from Saccharomyces cerevisiae (strain ATCC 204508 / S288c) (Baker's yeast).